Here is a 62-residue protein sequence, read N- to C-terminus: MAKTIVIKQIGSPIRRPEKQRQTLIGLGLNKMHKTRELEDTPAVRGMINKIPHMVQIIEEKG.

Belongs to the universal ribosomal protein uL30 family. Part of the 50S ribosomal subunit.

The protein is Large ribosomal subunit protein uL30 of Dinoroseobacter shibae (strain DSM 16493 / NCIMB 14021 / DFL 12).